A 595-amino-acid polypeptide reads, in one-letter code: Putative capsid protein V20 (595 aa).

The protein resides in the virion. May self assemble to form an icosahedral capsid. Most abundant protein in the virion. This Sputnik virophage protein is Putative capsid protein V20.